The primary structure comprises 446 residues: O-antigen polymerase (446 aa).

The next 11 membrane-spanning stretches (helical) occupy residues 11–31 (ICSY…VINE), 33–53 (FCEI…VIII), 58–78 (QGGF…FILI), 104–124 (IYVF…VLLY), 147–167 (QLSM…IKSY), 186–206 (LYDE…SLLF), 211–231 (NFIL…LVGL), 252–272 (LKIK…SLFL), 355–375 (IYLG…SLAF), 391–411 (KLAY…IYFA), and 415–435 (LFDF…LSIV).

It localises to the cell inner membrane. The catalysed reaction is n lipid-linked O-antigen repeat units = a lipid-linked O antigen + (n-1) polyisoprenyl diphosphate.. The protein operates within bacterial outer membrane biogenesis; LPS O-antigen biosynthesis. Functionally, polymerase involved in the biosynthesis of the lipopolysaccharide (LPS). Catalyzes the polymerization of the O-antigen repeat units on the periplasmic face of the inner membrane, leading to the formation of the lipid-linked O-antigen molecule. In vitro, shows a preference for bacteria-based, undecaprenyl-containing substrates rather than eukaryote-based, dolichol-containing substrates. In Escherichia coli, this protein is O-antigen polymerase.